Here is a 280-residue protein sequence, read N- to C-terminus: MASGKKKTSRKPKNRSVKNEKLASFIKDFDSQVKIITEEMKASVVNILKEVDSQYNIEIIKLPMAIREMCWLDYIAKGGSQKALEAAATVKVDMEEITSTVTKTPFKADKKVKKGKCKPDDETVELNPLKSVIRTKTKAKVAAKKPSTARRTRASVGNVANTSKRTSKRGRATPSASKQAETSLLGYTPAATPRIDTSIFKTPALRTPCMQEPVYTFSANGSPLAGMDELFINVPARDGKIIRLLASEVDGLDINRLDQQAFENIKLLSSRLERLCKKLK.

The span at 140 to 153 (KVAAKKPSTARRTR) shows a compositional bias: basic residues. The segment at 140–187 (KVAAKKPSTARRTRASVGNVANTSKRTSKRGRATPSASKQAETSLLGY) is disordered.

It belongs to the borealin family. In terms of assembly, component of the CPC at least composed of survivin/birc5, incenp, cdca8/borealin and/or cdca9/dasra-A, and aurkb/aurora-B. Interacts with incenp (via N-terminus).

It localises to the nucleus. It is found in the chromosome. Its subcellular location is the centromere. The protein localises to the cytoplasm. The protein resides in the cytoskeleton. It localises to the spindle. In terms of biological role, component of the chromosomal passenger complex (CPC), a complex that acts as a key regulator of mitosis. The CPC complex has essential functions at the centromere in ensuring correct chromosome alignment and segregation and is required for chromatin-induced microtubule stabilization and spindle assembly. Contributes to CPC function by facilitating loading of the CPC onto chromosomes. This Xenopus laevis (African clawed frog) protein is Borealin (cdca8).